A 344-amino-acid polypeptide reads, in one-letter code: Ion-translocating oxidoreductase complex subunit D (344 aa).

Transmembrane regions (helical) follow at residues 23-43 (LVLGACVPGLLTLTWLYGPGT), 44-64 (LLNLAWASLVALACEAAMLAL), 77-99 (SALVTALLLAVALPPYAPWWLTL), and 120-140 (PFNPAMLGYVVALVSFPLEMT). An FMN phosphoryl threonine modification is found at Thr-172. 5 consecutive transmembrane segments (helical) span residues 198–218 (LGSAGSEWVNLAFLLGGLFLL), 222–242 (LFTWHAPLGMLAGLFAMSLLF), 252–272 (GSPLFHLFSGATMLGAFFIVT), 285–305 (LVFGLGVGVLTYVIRAWGGYP), and 306–326 (DGVAFAVLLMNLAAPTIDYYT).

The protein belongs to the NqrB/RnfD family. In terms of assembly, the complex is composed of six subunits: RnfA, RnfB, RnfC, RnfD, RnfE and RnfG. The cofactor is FMN.

The protein localises to the cell inner membrane. Part of a membrane-bound complex that couples electron transfer with translocation of ions across the membrane. The sequence is that of Ion-translocating oxidoreductase complex subunit D from Pseudomonas aeruginosa (strain UCBPP-PA14).